We begin with the raw amino-acid sequence, 404 residues long: Multidrug resistance protein MdtG (404 aa).

Helical transmembrane passes span 19 to 39 (LGCF…PLYV), 56 to 76 (LVFS…GGLA), 90 to 110 (LGMA…QFLI), 113 to 133 (ALLG…ATQV), 144 to 164 (TLST…GLLA), 171 to 191 (PVFF…FFFI), 222 to 242 (LFVT…ILTL), 254 to 274 (IAFI…LSAP), 288 to 308 (ILIV…FVQT), 317 to 337 (FLLG…LVYN), and 376 to 396 (AVFC…WNSL).

This sequence belongs to the major facilitator superfamily. DHA1 family. MdtG (TC 2.A.1.2.20) subfamily.

Its subcellular location is the cell inner membrane. This Salmonella schwarzengrund (strain CVM19633) protein is Multidrug resistance protein MdtG.